A 283-amino-acid polypeptide reads, in one-letter code: Protein/nucleic acid deglycase HchA (283 aa).

Residues H86, E91, and H123 each coordinate Zn(2+). The Nucleophile role is filled by C185.

Belongs to the peptidase C56 family. HchA subfamily. As to quaternary structure, homodimer.

Its subcellular location is the cytoplasm. It carries out the reaction N(omega)-(1-hydroxy-2-oxopropyl)-L-arginyl-[protein] + H2O = lactate + L-arginyl-[protein] + H(+). The enzyme catalyses N(6)-(1-hydroxy-2-oxopropyl)-L-lysyl-[protein] + H2O = lactate + L-lysyl-[protein] + H(+). It catalyses the reaction S-(1-hydroxy-2-oxopropyl)-L-cysteinyl-[protein] + H2O = lactate + L-cysteinyl-[protein] + H(+). The catalysed reaction is N(omega)-(1-hydroxy-2-oxoethyl)-L-arginyl-[protein] + H2O = L-arginyl-[protein] + glycolate + H(+). It carries out the reaction N(6)-(1-hydroxy-2-oxoethyl)-L-lysyl-[protein] + H2O = glycolate + L-lysyl-[protein] + H(+). The enzyme catalyses S-(1-hydroxy-2-oxoethyl)-L-cysteinyl-[protein] + H2O = glycolate + L-cysteinyl-[protein] + H(+). It catalyses the reaction N(2)-(1-hydroxy-2-oxopropyl)-dGTP + H2O = lactate + dGTP + H(+). The catalysed reaction is N(2)-(1-hydroxy-2-oxopropyl)-GTP + H2O = lactate + GTP + H(+). It carries out the reaction N(2)-(1-hydroxy-2-oxopropyl)-GDP + H2O = lactate + GDP + H(+). The enzyme catalyses N(2)-(1-hydroxy-2-oxopropyl)-GMP + H2O = lactate + GMP + H(+). It catalyses the reaction N(2)-(1-hydroxy-2-oxoethyl)-dGTP + H2O = dGTP + glycolate + H(+). The catalysed reaction is N(2)-(1-hydroxy-2-oxoethyl)-GTP + H2O = glycolate + GTP + H(+). It carries out the reaction N(2)-(1-hydroxy-2-oxoethyl)-GDP + H2O = glycolate + GDP + H(+). The enzyme catalyses N(2)-(1-hydroxy-2-oxoethyl)-GMP + H2O = glycolate + GMP + H(+). It catalyses the reaction an N(2)-(1-hydroxy-2-oxopropyl)-guanosine in RNA + H2O = a guanosine in RNA + lactate + H(+). The catalysed reaction is an N(2)-(1-hydroxy-2-oxopropyl)-2'-deoxyguanosine in DNA + H2O = a 2'-deoxyguanosine in DNA + lactate + H(+). It carries out the reaction an N(2)-(1-hydroxy-2-oxoethyl)-guanosine in RNA + H2O = a guanosine in RNA + glycolate + H(+). The enzyme catalyses an N(2)-(1-hydroxy-2-oxoethyl)-2'-deoxyguanosine in DNA + H2O = a 2'-deoxyguanosine in DNA + glycolate + H(+). Functionally, protein and nucleotide deglycase that catalyzes the deglycation of the Maillard adducts formed between amino groups of proteins or nucleotides and reactive carbonyl groups of glyoxals. Thus, functions as a protein deglycase that repairs methylglyoxal- and glyoxal-glycated proteins, and releases repaired proteins and lactate or glycolate, respectively. Deglycates cysteine, arginine and lysine residues in proteins, and thus reactivates these proteins by reversing glycation by glyoxals. Acts on early glycation intermediates (hemithioacetals and aminocarbinols), preventing the formation of Schiff bases and advanced glycation endproducts (AGE). Also functions as a nucleotide deglycase able to repair glycated guanine in the free nucleotide pool (GTP, GDP, GMP, dGTP) and in DNA and RNA. Is thus involved in a major nucleotide repair system named guanine glycation repair (GG repair), dedicated to reversing methylglyoxal and glyoxal damage via nucleotide sanitization and direct nucleic acid repair. Plays an important role in protecting cells from carbonyl stress. The polypeptide is Protein/nucleic acid deglycase HchA (Escherichia coli O8 (strain IAI1)).